Reading from the N-terminus, the 403-residue chain is Peroxisomal membrane protein PEX13 (403 aa).

Positions 1-11 (MASQPPPPPKP) are enriched in pro residues. The interval 1–69 (MASQPPPPPK…SQQTGSGNLN (69 aa)) is disordered. Residues 1–134 (MASQPPPPPK…SSRGAFQSIE (134 aa)) are Peroxisomal matrix-facing. Residues 59-69 (PSQQTGSGNLN) are compositionally biased toward polar residues. A helical transmembrane segment spans residues 135–155 (SIVHAFASVSMMMDATFSAVY). Residues 145–233 (MMMDATFSAV…EDRAANSAKS (89 aa)) are targeting to peroxisomes. The Cytoplasmic portion of the chain corresponds to 156–174 (NSFRAVLDVANHFSRLKIH). The helical transmembrane segment at 175 to 192 (FTKVFSAFALVRTIRYLY) threads the bilayer. Residues 175–196 (FTKVFSAFALVRTIRYLYRRLQ) are interaction with PEX19. Topologically, residues 193–233 (RRLQWMIGLRRGLENEDLWAESEGTVACLGAEDRAANSAKS) are peroxisomal matrix. A helical transmembrane segment spans residues 234–254 (WPIFLFFAVILGGPYLIWKLL). Topologically, residues 255 to 403 (STHSDEVTDS…TGKNGDKQDL (149 aa)) are cytoplasmic. Residues 272–336 (DDHVVARAEY…PANYVKILGK (65 aa)) form the SH3 domain. Ser354 carries the phosphoserine modification.

Belongs to the peroxin-13 family. In terms of assembly, interacts (via SH3 domain) with PEX14 (via SH3-binding motif); forming the PEX13-PEX14 docking complex. Interacts with PEX19.

It is found in the peroxisome membrane. Component of the PEX13-PEX14 docking complex, a translocon channel that specifically mediates the import of peroxisomal cargo proteins bound to PEX5 receptor. The PEX13-PEX14 docking complex forms a large import pore which can be opened to a diameter of about 9 nm. Mechanistically, PEX5 receptor along with cargo proteins associates with the PEX14 subunit of the PEX13-PEX14 docking complex in the cytosol, leading to the insertion of the receptor into the organelle membrane with the concomitant translocation of the cargo into the peroxisome matrix. Involved in the import of PTS1- and PTS2-type containing proteins. This is Peroxisomal membrane protein PEX13 (PEX13) from Bos taurus (Bovine).